The chain runs to 359 residues: Chorismate synthase (359 aa).

Residue R47 coordinates NADP(+). FMN is bound by residues 123–125, G283, 298–302, and R326; these read RSS and KPTSS.

Belongs to the chorismate synthase family. In terms of assembly, homotetramer. It depends on FMNH2 as a cofactor.

It carries out the reaction 5-O-(1-carboxyvinyl)-3-phosphoshikimate = chorismate + phosphate. It participates in metabolic intermediate biosynthesis; chorismate biosynthesis; chorismate from D-erythrose 4-phosphate and phosphoenolpyruvate: step 7/7. Functionally, catalyzes the anti-1,4-elimination of the C-3 phosphate and the C-6 proR hydrogen from 5-enolpyruvylshikimate-3-phosphate (EPSP) to yield chorismate, which is the branch point compound that serves as the starting substrate for the three terminal pathways of aromatic amino acid biosynthesis. This reaction introduces a second double bond into the aromatic ring system. The protein is Chorismate synthase of Chlamydia felis (strain Fe/C-56) (Chlamydophila felis).